We begin with the raw amino-acid sequence, 165 residues long: Cysteine-rich hydrophobic domain-containing protein 2 (165 aa).

A coiled-coil region spans residues Met1–Ser26. Positions Cys88 to Cys106 match the CHIC motif (Cys-rich) motif.

This sequence belongs to the CHIC family. Palmitoylation in the CHIC motif is required for membrane association.

The protein resides in the membrane. It is found in the golgi apparatus. This Mus musculus (Mouse) protein is Cysteine-rich hydrophobic domain-containing protein 2 (Chic2).